Here is a 319-residue protein sequence, read N- to C-terminus: Taste receptor type 2 member 7 (319 aa).

Topologically, residues 1–9 are extracellular; it reads MADKVQTTL. A helical transmembrane segment spans residues 10-30; it reads LFLAVGEFSVGILGNAFIGLV. The Cytoplasmic portion of the chain corresponds to 31–55; sequence NCMDWVKKRKIASIDLILTSLAISR. The helical transmembrane segment at 56 to 76 threads the bilayer; that stretch reads ICLLCVILLDCFILVLYPDVY. At 77–94 the chain is on the extracellular side; it reads ATGKEMRIIDFFWTLTNH. Residues 95-115 form a helical membrane-spanning segment; that stretch reads LSIWFATCLSIYYXFRIANFF. The Cytoplasmic portion of the chain corresponds to 116 to 128; that stretch reads HPLFLWMKWRIDR. A helical transmembrane segment spans residues 129-149; it reads VISWILLGCVVLSVFISLPAT. At 150-187 the chain is on the extracellular side; that stretch reads ENLNADFRFCVKAKRKTNLTWSCRVNKTQHASTKLFLN. N-linked (GlcNAc...) asparagine glycans are attached at residues N167 and N175. Residues 188–208 traverse the membrane as a helical segment; that stretch reads LATLLPFCVCLMSFFLLILSL. Over 209–235 the chain is Cytoplasmic; that stretch reads RRHIRRMQLSATGCRDPSTEAHVRALK. A helical transmembrane segment spans residues 236–256; sequence AVISFLLLFIAYYLSFLVATS. Over 257 to 266 the chain is Extracellular; it reads SYFMPETELA. The chain crosses the membrane as a helical span at residues 267 to 287; it reads VIFGESIALIYPSSHSFILIL. Topologically, residues 288-319 are cytoplasmic; the sequence is GNNKLRHASLKVIWKVMSILKGRKFQQHKQIG.

Belongs to the G-protein coupled receptor T2R family.

The protein resides in the membrane. Gustducin-coupled receptor implicated in the perception of bitter compounds in the oral cavity and the gastrointestinal tract. Signals through PLCB2 and the calcium-regulated cation channel TRPM5. The sequence is that of Taste receptor type 2 member 7 (TAS2R7) from Pan troglodytes (Chimpanzee).